The primary structure comprises 679 residues: Glycine--tRNA ligase beta subunit (679 aa).

It belongs to the class-II aminoacyl-tRNA synthetase family. As to quaternary structure, tetramer of two alpha and two beta subunits.

Its subcellular location is the cytoplasm. It catalyses the reaction tRNA(Gly) + glycine + ATP = glycyl-tRNA(Gly) + AMP + diphosphate. This chain is Glycine--tRNA ligase beta subunit, found in Streptococcus pyogenes serotype M49 (strain NZ131).